The sequence spans 152 residues: MIYYVIALFVIAIDQISKWLIVKNMELGTSIPIIDNVLYITSHRNRGAAWGILENKMWFFYIITVVFVVFIVFYMKKYAKTDKLLGISLGLILGGAMGNFIDRVFRQEVVDFIHVYIFSYNYPVFNIADSALCIGVVLIIIQTLLEGKKAKE.

The next 2 helical transmembrane spans lie at 55-75 (NKMWFFYIITVVFVVFIVFYM) and 85-105 (LGISLGLILGGAMGNFIDRVF). Active-site residues include D111 and D129. The helical transmembrane segment at 124-144 (VFNIADSALCIGVVLIIIQTL) threads the bilayer.

This sequence belongs to the peptidase A8 family.

Its subcellular location is the cell membrane. The catalysed reaction is Release of signal peptides from bacterial membrane prolipoproteins. Hydrolyzes -Xaa-Yaa-Zaa-|-(S,diacylglyceryl)Cys-, in which Xaa is hydrophobic (preferably Leu), and Yaa (Ala or Ser) and Zaa (Gly or Ala) have small, neutral side chains.. It participates in protein modification; lipoprotein biosynthesis (signal peptide cleavage). Its function is as follows. This protein specifically catalyzes the removal of signal peptides from prolipoproteins. This chain is Lipoprotein signal peptidase, found in Bacillus cereus (strain B4264).